Here is a 412-residue protein sequence, read N- to C-terminus: Aspartokinase (412 aa).

2 consecutive ACT domains span residues 266–340 (LTIR…GDTN) and 346–412 (IVGV…RQGE).

The protein belongs to the aspartokinase family.

It carries out the reaction L-aspartate + ATP = 4-phospho-L-aspartate + ADP. Its pathway is amino-acid biosynthesis; L-lysine biosynthesis via DAP pathway; (S)-tetrahydrodipicolinate from L-aspartate: step 1/4. It participates in amino-acid biosynthesis; L-methionine biosynthesis via de novo pathway; L-homoserine from L-aspartate: step 1/3. The protein operates within amino-acid biosynthesis; L-threonine biosynthesis; L-threonine from L-aspartate: step 1/5. The sequence is that of Aspartokinase (lysC) from Pseudomonas aeruginosa (strain ATCC 15692 / DSM 22644 / CIP 104116 / JCM 14847 / LMG 12228 / 1C / PRS 101 / PAO1).